The primary structure comprises 196 residues: Phosphatidylglycerol/phosphatidylinositol transfer protein (196 aa).

The N-terminal stretch at 1–21 (MVAYKNIALLALTFTIASVES) is a signal peptide. Positions 22 to 60 (LSIVGARPYIDKALSVFDIKTPNSQSEKPEIILTFAGPD) are excised as a propeptide.

Belongs to the NPC2 family. Monomer.

Functionally, catalyzes the intermembrane transfer of phosphatidylglycerol and phosphatidylinositol. The protein is Phosphatidylglycerol/phosphatidylinositol transfer protein (NPC2) of Debaryomyces hansenii (strain ATCC 36239 / CBS 767 / BCRC 21394 / JCM 1990 / NBRC 0083 / IGC 2968) (Yeast).